Reading from the N-terminus, the 81-residue chain is Cysteine-rich and transmembrane domain-containing protein PCC1 (81 aa).

Over residues 1–22 (MNQSAQNYFSVQKPSETSSGPY) the composition is skewed to polar residues. Residues 1-34 (MNQSAQNYFSVQKPSETSSGPYTSPPPIGYPTRD) are disordered. The chain crosses the membrane as a helical span at residues 56-74 (AIMSCFSTCMECIFCCGVC).

Belongs to the CYSTM1 family. In terms of tissue distribution, expressed at very low levels in seedlings and petioles, and at higher levels in leaves. Also present in phloem sap.

It is found in the cell membrane. In terms of biological role, modulates resistance against pathogens including oomycetes (e.g. Hyaloperonospora parasitica and Phytophthora brassicae) and fungi (e.g. Phytophthora brassicae). Controls the abscisic acid-mediated (ABA) signaling pathways. Regulator of the flowering time in response to stress (e.g. UV-C). Regulates polar lipid content; promotes phosphatidylinositol (PI) and 18:0 but prevents 18:2 and 18:3 polar lipids accumulation. This Arabidopsis thaliana (Mouse-ear cress) protein is Cysteine-rich and transmembrane domain-containing protein PCC1 (PCC1).